The primary structure comprises 156 residues: Protein CURVATURE THYLAKOID 1C, chloroplastic (156 aa).

The N-terminal 55 residues, 1-55 (MASISATLPSPLLLTQRKSNLTSIQKLPFSLTRGTNDLSPLSLTRNPSSISLMVK), are a transit peptide targeting the chloroplast. Residues 56–83 (ASGESSDSSTDLDVVSTIQNVWDKSEDR) are Stromal-facing. A helical transmembrane segment spans residues 84–104 (LGLIGLGFAGIVALWASLNLI). Residues 105-109 (TAIDK) are Lumenal-facing. A helical transmembrane segment spans residues 110–130 (LPVISSGFELVGILFSTWFTY). Residues 131-156 (RYLLFKPDRQELSKIVKKSVADILGQ) are Stromal-facing.

This sequence belongs to the CURT family. Homo- and heterodimers and trimers. Interacts with PSAD2.

It is found in the plastid. Its subcellular location is the chloroplast thylakoid membrane. Its function is as follows. Determines thylakoid architecture by inducing membrane curvature. This Arabidopsis thaliana (Mouse-ear cress) protein is Protein CURVATURE THYLAKOID 1C, chloroplastic (CURT1C).